Here is a 391-residue protein sequence, read N- to C-terminus: Transaldolase (391 aa).

The Schiff-base intermediate with substrate role is filled by K134. EF-hand domains are found at residues 329 to 364 (TLTHAAEELFHVYDLDGDGIITREEWLGTDAVFDAL) and 365 to 387 (DANHDGKVTPEDMGAGLGVVLHL). Ca(2+) is bound by residues D342, D344, D346, E353, D365, N367, D369, K371, and D376.

The protein belongs to the transaldolase family. Type 1 subfamily.

Its subcellular location is the cytoplasm. The enzyme catalyses D-sedoheptulose 7-phosphate + D-glyceraldehyde 3-phosphate = D-erythrose 4-phosphate + beta-D-fructose 6-phosphate. It participates in carbohydrate degradation; pentose phosphate pathway; D-glyceraldehyde 3-phosphate and beta-D-fructose 6-phosphate from D-ribose 5-phosphate and D-xylulose 5-phosphate (non-oxidative stage): step 2/3. Functionally, transaldolase is important for the balance of metabolites in the pentose-phosphate pathway. In Thermosynechococcus vestitus (strain NIES-2133 / IAM M-273 / BP-1), this protein is Transaldolase.